A 596-amino-acid polypeptide reads, in one-letter code: Transketolase-like protein 1 (596 aa).

His-46 serves as a coordination point for substrate. Thiamine diphosphate is bound by residues Ser-49 and Gly-94 to Leu-96. Asp-126 serves as a coordination point for Mg(2+). Thiamine diphosphate-binding residues include Val-127 and Asn-156. Mg(2+) is bound by residues Asn-156 and Leu-158. The thiamine diphosphate site is built by Lys-218 and His-232. 3 residues coordinate substrate: His-232, Arg-292, and Ser-319. Thiamine diphosphate contacts are provided by Glu-340 and Phe-366. Catalysis depends on Glu-340, which acts as the Proton donor. Substrate-binding residues include His-390 and Asp-398. Residue Gln-402 participates in thiamine diphosphate binding. Arg-448 contributes to the substrate binding site.

The protein belongs to the transketolase family. As to quaternary structure, homodimer. Requires Mg(2+) as cofactor. The cofactor is Ca(2+). Mn(2+) serves as cofactor. Co(2+) is required as a cofactor. It depends on thiamine diphosphate as a cofactor.

It localises to the cytoplasm. It carries out the reaction D-sedoheptulose 7-phosphate + D-glyceraldehyde 3-phosphate = aldehydo-D-ribose 5-phosphate + D-xylulose 5-phosphate. Catalyzes the transfer of a two-carbon ketol group from a ketose donor to an aldose acceptor, via a covalent intermediate with the cofactor thiamine pyrophosphate. This is Transketolase-like protein 1 (TKTL1) from Bos taurus (Bovine).